We begin with the raw amino-acid sequence, 222 residues long: Glutathione S-transferase A4 (222 aa).

Methionine 1 bears the N-acetylmethionine mark. Residues 3–83 (TKPKLHYPNG…YIADKHHLFG (81 aa)) enclose the GST N-terminal domain. Glutathione contacts are provided by residues tyrosine 9, 54–55 (QV), and 67–68 (QT). A GST C-terminal domain is found at 85–208 (DLKERTLIDM…EPGSKKKPPP (124 aa)).

Belongs to the GST superfamily. Alpha family. As to quaternary structure, homodimer.

Its subcellular location is the cytoplasm. The enzyme catalyses RX + glutathione = an S-substituted glutathione + a halide anion + H(+). Its function is as follows. Conjugation of reduced glutathione to a wide number of exogenous and endogenous hydrophobic electrophiles. The polypeptide is Glutathione S-transferase A4 (GSTA4) (Bos taurus (Bovine)).